The following is a 713-amino-acid chain: MAKSPENSTLEEILGQYQRSLREHASRSIHQLTCALKEGDVTIGEDAPNLSFSTSVGNEDARTAWPELQQSHAVNQLKDLLRQQADKESEVSPSRRRKMSPLRSLEHEETNMPTMHDLVHTINDQSQYIHHLEAEVKFCKEELSGMKNKIQVVVLENEGLQQQLKSQRQEETLREQTLLDASGNMHNSWITTGEDSGVGETSKRPFSHDNADFGKAASAGEQLELEKLKLTYEEKCEIEESQLKFLRNDLAEYQRTCEDLKEQLKHKEFLLAANTCNRVGGLCLKCAQHEAVLSQTHTNVHMQTIERLVKERDDLMSALVSVRSSLADTQQREASAYEQVKQVLQISEEANFEKTKALIQCDQLRKELERQAERLEKELASQQEKRAIEKDMMKKEITKEREYMGSKMLILSQNIAQLEAQVEKVTKEKISAINQLEEIQSQLASREMDVTKVCGEMRYQLNKTNMEKDEAEKEHREFRAKTNRDLEIKDQEIEKLRIELDESKQHLEQEQQKAALAREECLRLTELLGESEHQLHLTRQEKDSIQQSFSKEAKAQALQAQQREQELTQKIQQMEAQHDKTENEQYLLLTSQNTFLTKLKEECCTLAKKLEQISQKTRSEIAQLSQEKRYTYDKLGKLQRRNEELEEQCVQHGRVHETMKQRLRQLDKHSQATAQQLVQLLSKQNQLLLERQSLSEEVDRLRTQLPSMPQSDC.

S4 and S28 each carry phosphoserine. The disordered stretch occupies residues 84 to 103 (QADKESEVSPSRRRKMSPLR). A coiled-coil region spans residues 129 to 175 (IHHLEAEVKFCKEELSGMKNKIQVVVLENEGLQQQLKSQRQEETLRE). The tract at residues 194–215 (EDSGVGETSKRPFSHDNADFGK) is disordered. Positions 201–212 (TSKRPFSHDNAD) are enriched in basic and acidic residues. A sufficient for homodimerization region spans residues 216 to 713 (AASAGEQLEL…QLPSMPQSDC (498 aa)). 2 coiled-coil regions span residues 223-273 (LELE…LLAA) and 348-707 (EEAN…QLPS). The mediates interaction with OFD1 stretch occupies residues 533–713 (HQLHLTRQEK…QLPSMPQSDC (181 aa)).

Homodimer. Interacts with OFD1; the interaction is direct. Interacts with FAM161A. Interacts with RABEP2, ERC1 and CEP131. In terms of tissue distribution, expressed in thymus, prostate, testis, ovary, small intestine, colon, mucosa, colon and renal cancer tumors.

The protein localises to the cytoplasm. It localises to the cytoskeleton. Its subcellular location is the microtubule organizing center. It is found in the centrosome. The protein resides in the centriole. The protein localises to the cilium basal body. It localises to the cell junction. Its function is as follows. Plays a role in the establishment of cell polarity and epithelial lumen formation. Also plays an essential role in ciliogenesis and subsequent Hedgehog signaling pathway that requires the presence of intact primary cilia for pathway activation. Mechanistically, interacts with and mediates RABEP2 centrosomal localization which is critical for ciliogenesis. The sequence is that of Serologically defined colon cancer antigen 8 (SDCCAG8) from Homo sapiens (Human).